The primary structure comprises 512 residues: Probable cytosol aminopeptidase (512 aa).

Residues Lys-284 and Asp-289 each coordinate Mn(2+). Lys-296 is an active-site residue. Residues Asp-307, Asp-366, and Glu-368 each coordinate Mn(2+). Residue Arg-370 is part of the active site.

This sequence belongs to the peptidase M17 family. Mn(2+) is required as a cofactor.

The protein resides in the cytoplasm. It catalyses the reaction Release of an N-terminal amino acid, Xaa-|-Yaa-, in which Xaa is preferably Leu, but may be other amino acids including Pro although not Arg or Lys, and Yaa may be Pro. Amino acid amides and methyl esters are also readily hydrolyzed, but rates on arylamides are exceedingly low.. It carries out the reaction Release of an N-terminal amino acid, preferentially leucine, but not glutamic or aspartic acids.. Functionally, presumably involved in the processing and regular turnover of intracellular proteins. Catalyzes the removal of unsubstituted N-terminal amino acids from various peptides. The polypeptide is Probable cytosol aminopeptidase (Cupriavidus necator (strain ATCC 17699 / DSM 428 / KCTC 22496 / NCIMB 10442 / H16 / Stanier 337) (Ralstonia eutropha)).